Here is a 632-residue protein sequence, read N- to C-terminus: MSSQEASKMLRTYNIAWWGNNYYDVNELGHISVCPDPDVPEARVDLAQLVKTREAQGQRLPALFCFPQILQHRLRSINAAFKRARESYGYNGDYFLVYPIKVNQHRRVIESLIHSGEPLGLEAGSKAELMAVLAHAGMTRSVIVCNGYKDREYIRLALIGEKMGHKVYLVIEKMSEIAIVLDEAERLNVVPRLGVRARLASQGSGKWQSSGGEKSKFGLAATQVLQLVETLREAGRLDSLQLLHFHLGSQMANIRDIATGVRESARFYVELHKLGVNIQCFDVGGGLGVDYEGTRSQSDCSVNYGLNEYANNIIWAIGDACEENGLPHPTVITESGRAVTAHHTVLVSNIIGVERNEYTVPTAPAEDAPRALQSMWETWQEMHEPGTRRSLREWLHDSQMDLHDIHIGYSSGTFSLQERAWAEQLYLSMCHEVQKQLDPQNRAHRPIIDELQERMADKMYVNFSLFQSMPDAWGIDQLFPVLPLEGLDQVPERRAVLLDITCDSDGAIDHYIDGDGIATTMPMPEYDPENPPMLGFFMVGAYQEILGNMHNLFGDTEAVDVFVFPDGSVEVELSDEGDTVADMLQYVQLDPKTLLTQFRDQVKKTDLDAELQQQFLEEFEAGLYGYTYLEDE.

Lysine 101 carries the post-translational modification N6-(pyridoxal phosphate)lysine. 281 to 291 contributes to the substrate binding site; sequence FDVGGGLGVDY.

Belongs to the Orn/Lys/Arg decarboxylase class-II family. SpeA subfamily. It depends on Mg(2+) as a cofactor. Pyridoxal 5'-phosphate is required as a cofactor.

It catalyses the reaction L-arginine + H(+) = agmatine + CO2. It functions in the pathway amine and polyamine biosynthesis; agmatine biosynthesis; agmatine from L-arginine: step 1/1. Functionally, catalyzes the biosynthesis of agmatine from arginine. This is Biosynthetic arginine decarboxylase from Escherichia coli O157:H7 (strain EC4115 / EHEC).